A 246-amino-acid polypeptide reads, in one-letter code: Carbonic anhydrase (246 aa).

Residues M1–A22 form the signal peptide. The region spanning S23–E246 is the Alpha-carbonic anhydrase domain. The cysteines at positions 46 and 201 are disulfide-linked. H84 serves as the catalytic Proton acceptor. Positions 111, 113, and 130 each coordinate Zn(2+). T197–T198 serves as a coordination point for substrate.

This sequence belongs to the alpha-carbonic anhydrase family. Requires Zn(2+) as cofactor.

It is found in the periplasm. It carries out the reaction hydrogencarbonate + H(+) = CO2 + H2O. Functionally, reversible hydration of carbon dioxide. This Klebsiella pneumoniae protein is Carbonic anhydrase (cah).